Reading from the N-terminus, the 379-residue chain is Cytochrome b (379 aa).

The next 4 helical transmembrane spans lie at 34–54, 78–99, 114–134, and 179–199; these read FGSL…LLAM, WFIR…YLHI, WNTG…GYVL, and FFAL…VHLT. Residues H84 and H98 each coordinate heme b. Heme b-binding residues include H183 and H197. H202 provides a ligand contact to a ubiquinone. The next 4 helical transmembrane spans lie at 227–247, 289–309, 321–341, and 348–368; these read LKDI…AFFS, LGGV…PLLH, LSQL…WIGS, and FIII…VLFP.

Belongs to the cytochrome b family. As to quaternary structure, the cytochrome bc1 complex contains 11 subunits: 3 respiratory subunits (MT-CYB, CYC1 and UQCRFS1), 2 core proteins (UQCRC1 and UQCRC2) and 6 low-molecular weight proteins (UQCRH/QCR6, UQCRB/QCR7, UQCRQ/QCR8, UQCR10/QCR9, UQCR11/QCR10 and a cleavage product of UQCRFS1). This cytochrome bc1 complex then forms a dimer. Heme b is required as a cofactor.

Its subcellular location is the mitochondrion inner membrane. In terms of biological role, component of the ubiquinol-cytochrome c reductase complex (complex III or cytochrome b-c1 complex) that is part of the mitochondrial respiratory chain. The b-c1 complex mediates electron transfer from ubiquinol to cytochrome c. Contributes to the generation of a proton gradient across the mitochondrial membrane that is then used for ATP synthesis. In Struthio camelus (Common ostrich), this protein is Cytochrome b (MT-CYB).